Reading from the N-terminus, the 332-residue chain is Probable allantoicase (332 aa).

This sequence belongs to the allantoicase family.

It carries out the reaction allantoate + H2O = (S)-ureidoglycolate + urea. It functions in the pathway nitrogen metabolism; (S)-allantoin degradation; (S)-ureidoglycolate from allantoate (aminidohydrolase route): step 1/1. The polypeptide is Probable allantoicase (Pseudomonas aeruginosa (strain UCBPP-PA14)).